The primary structure comprises 264 residues: Probable DNA polymerase sliding clamp 2 (264 aa).

A DNA-binding region spans residues 75 to 94; it reads SIAQEATVGIKISNFVRILD.

This sequence belongs to the PCNA family.

Functionally, sliding clamp subunit. Responsible for tethering the catalytic subunit of DNA polymerase to DNA during high-speed replication. The chain is Probable DNA polymerase sliding clamp 2 from Paramecium bursaria Chlorella virus 1 (PBCV-1).